The following is a 291-amino-acid chain: Glycine--tRNA ligase alpha subunit (291 aa).

It belongs to the class-II aminoacyl-tRNA synthetase family. In terms of assembly, tetramer of two alpha and two beta subunits.

It localises to the cytoplasm. The enzyme catalyses tRNA(Gly) + glycine + ATP = glycyl-tRNA(Gly) + AMP + diphosphate. The protein is Glycine--tRNA ligase alpha subunit of Rhizorhabdus wittichii (strain DSM 6014 / CCUG 31198 / JCM 15750 / NBRC 105917 / EY 4224 / RW1) (Sphingomonas wittichii).